Here is a 468-residue protein sequence, read N- to C-terminus: Glucose transport protein (468 aa).

Topologically, residues 1-17 are cytoplasmic; sequence MNPSSSPSQSTANVKFV. The chain crosses the membrane as a helical span at residues 18 to 38; the sequence is LLISGVAALGGFLFGFDTAVI. Residues 39-58 lie on the Extracellular side of the membrane; the sequence is NGAVAALQKHFQTDSLLTGL. The chain crosses the membrane as a helical span at residues 59–78; it reads SVSLALLGSALGAFGAGPIA. Topologically, residues 79 to 84 are cytoplasmic; that stretch reads DRHGRI. Residues 85-105 traverse the membrane as a helical segment; that stretch reads KTMILAAVLFTLSSIGSGLPF. Topologically, residues 106-114 are extracellular; it reads TIWDFIFWR. A helical transmembrane segment spans residues 115–135; the sequence is VLGGIGVGAASVIAPAYIAEV. The Cytoplasmic segment spans residues 136–149; sequence SPAHLRGRLGSLQQ. The helical transmembrane segment at 150 to 170 threads the bilayer; it reads LAIVSGIFIALLSNWFIALMA. Over 171-186 the chain is Extracellular; that stretch reads GGSAQNPWLFGAAAWR. A helical transmembrane segment spans residues 187–207; it reads WMFWTELIPALLYGVCAFLIP. Topologically, residues 208 to 265 are cytoplasmic; sequence ESPRYLVAQGQGEKAAAILWKVEGGDVPSRIEEIQATVSLDHKPRFSDLLSRRGGLLP. The chain crosses the membrane as a helical span at residues 266 to 286; that stretch reads IVWIGMGLSALQQFVGINVIF. At 287–307 the chain is on the extracellular side; that stretch reads YYSSVLWRSVGFTEEKSLLIT. Residues 308–328 form a helical membrane-spanning segment; it reads VITGFINILTTLVAIAFVDKF. Residues 329-331 lie on the Cytoplasmic side of the membrane; sequence GRK. Residues 332–352 form a helical membrane-spanning segment; sequence PLLLMGSIGMTITLGILSVVF. The Extracellular segment spans residues 353-366; that stretch reads GGATVVNGQPTLTG. A helical transmembrane segment spans residues 367-387; that stretch reads AAGIIALVTANLYVFSFGFSW. Residues 388 to 412 are Cytoplasmic-facing; sequence GPIVWVLLGEMFNNKIRAAALSVAA. Residues 413-433 traverse the membrane as a helical segment; that stretch reads GVQWIANFIISTTFPPLLDTV. Topologically, residues 434 to 436 are extracellular; sequence GLG. Residues 437 to 457 form a helical membrane-spanning segment; it reads PAYGLYATSAAISIFFIWFFV. The Cytoplasmic portion of the chain corresponds to 458–468; that stretch reads KETKGKTLEQM.

The protein belongs to the major facilitator superfamily. Sugar transporter (TC 2.A.1.1) family.

It is found in the cell membrane. This Synechocystis sp. (strain ATCC 27184 / PCC 6803 / Kazusa) protein is Glucose transport protein (gtr).